Consider the following 445-residue polypeptide: Inner membrane metabolite transport protein YgcS (445 aa).

Topologically, residues 1-22 (MNTSPVRMDDLPLNRFHCRIAA) are cytoplasmic. Residues 23 to 43 (LTFGAHLTDGYVLGVIGYAII) traverse the membrane as a helical segment. Residues 44 to 56 (QLTPAMQLTPFMA) lie on the Periplasmic side of the membrane. A helical transmembrane segment spans residues 57-77 (GMIGGSALLGLFLGSLVLGWI). Residues 78 to 85 (SDHIGRQK) lie on the Cytoplasmic side of the membrane. The helical transmembrane segment at 86-106 (IFTFSFLLITLASFLQFFATT) threads the bilayer. At 107 to 114 (PEHLIGLR) the chain is on the periplasmic side. The chain crosses the membrane as a helical span at residues 115–135 (ILIGIGLGGDYSVGHTLLAEF). Topologically, residues 136-142 (SPRRHRG) are cytoplasmic. The chain crosses the membrane as a helical span at residues 143 to 163 (ILLGAFSVVWTVGYVLASIAG). Residues 164–175 (HHFISENPEAWR) lie on the Periplasmic side of the membrane. A helical transmembrane segment spans residues 176 to 196 (WLLASAALPALLITLLRWGTP). The Cytoplasmic portion of the chain corresponds to 197 to 253 (ESPRWLLRQGRFAEAHAIVHRYFGPHVLLGDEVVTATHKHIKTLFSSRYWRRTAFNS). Residues 254-274 (VFFVCLVIPWFVIYTWLPTIA) traverse the membrane as a helical segment. Over 275–286 (QTIGLEDALTAS) the chain is Periplasmic. The helical transmembrane segment at 287-307 (LMLNALLIVGALLGLVLTHLL) threads the bilayer. Residues 308 to 311 (AHRK) lie on the Cytoplasmic side of the membrane. A helical transmembrane segment spans residues 312–332 (FLLGSFLLLAATLVVMACLPS). The Periplasmic segment spans residues 333-337 (GSSLT). Residues 338–358 (LLLFVLFSTTISAVSNLVGIL) form a helical membrane-spanning segment. Topologically, residues 359-369 (PAESFPTDIRS) are cytoplasmic. The chain crosses the membrane as a helical span at residues 370–390 (LGVGFATAMSRLGAAVSTGLL). Over 391 to 400 (PWVLAQWGMQ) the chain is Periplasmic. The helical transmembrane segment at 401–421 (VTLLLLATVLLVGFVVTWLWA) threads the bilayer. Topologically, residues 422–445 (PETKALPLVAAGNVGGANEHSVSV) are cytoplasmic.

It belongs to the major facilitator superfamily. Sugar transporter (TC 2.A.1.1) family.

It localises to the cell inner membrane. This chain is Inner membrane metabolite transport protein YgcS (ygcS), found in Escherichia coli (strain K12).